A 191-amino-acid polypeptide reads, in one-letter code: 3-hydroxyanthranilate 3,4-dioxygenase 2 (191 aa).

Residue arginine 48 coordinates O2. Residues histidine 52, glutamate 73, and histidine 111 each coordinate Fe cation. A substrate-binding site is contributed by glutamate 73. Residues arginine 115 and glutamate 125 each contribute to the substrate site.

Belongs to the 3-HAO family. Requires Fe(2+) as cofactor.

It localises to the cytoplasm. It catalyses the reaction 3-hydroxyanthranilate + O2 = (2Z,4Z)-2-amino-3-carboxymuconate 6-semialdehyde. Its pathway is cofactor biosynthesis; NAD(+) biosynthesis; quinolinate from L-kynurenine: step 3/3. Functionally, catalyzes the oxidative ring opening of 3-hydroxyanthranilate to 2-amino-3-carboxymuconate semialdehyde, which spontaneously cyclizes to quinolinate. The sequence is that of 3-hydroxyanthranilate 3,4-dioxygenase 2 (bna1-2) from Aspergillus clavatus (strain ATCC 1007 / CBS 513.65 / DSM 816 / NCTC 3887 / NRRL 1 / QM 1276 / 107).